Reading from the N-terminus, the 204-residue chain is UPF0637 protein USA300HOU_1046.1 (204 aa).

It belongs to the UPF0637 family.

This Staphylococcus aureus (strain USA300 / TCH1516) protein is UPF0637 protein USA300HOU_1046.1.